The sequence spans 365 residues: PR domain zinc finger protein 12 (365 aa).

An SET domain is found at 86-203 (VEVIIAQSSI…PDQELLVWYG (118 aa)). C2H2-type zinc fingers lie at residues 243–265 (MRCV…MRIH), 271–293 (FVCR…VRLH), and 299–323 (YKCQ…SARH). The segment at 318–338 (QKSARHRPPSTALQAHSPALP) is disordered. Low complexity predominate over residues 329-338 (ALQAHSPALP).

It belongs to the class V-like SAM-binding methyltransferase superfamily. In terms of assembly, interacts with EHMT2.

The protein localises to the nucleus. In terms of biological role, transcriptional regulator necessary for the development of nociceptive neurons, playing a key role in determining the nociceptive lineage from neural crest cell progenitors. Initiates neurogenesis and activates downstream pro-neuronal transcription factors, such as NEUROD1, BRN3A, and ISL1, specifically within nociceptive neurons, while repressing non-nociceptor cell fates. Essential for the proper function of nociceptors in adults, influencing both their excitability and their gene expression, thereby impacting how these neurons respond to various pain stimuli. This Mus musculus (Mouse) protein is PR domain zinc finger protein 12 (Prdm12).